A 134-amino-acid polypeptide reads, in one-letter code: uncharacterized protein (134 aa).

This is an uncharacterized protein from Saccharomyces cerevisiae (strain ATCC 204508 / S288c) (Baker's yeast).